Consider the following 202-residue polypeptide: Small ribosomal subunit protein uS5 (202 aa).

A compositionally biased stretch (gly residues) spans 1–13 (MPGQQRRGGGSGG). Residues 1–31 (MPGQQRRGGGSGGSDRRERRDRSGGGPAQEK) are disordered. The segment covering 14–23 (SDRRERRDRS) has biased composition (basic and acidic residues). An S5 DRBM domain is found at 34–97 (YVERVVAINR…EEAKKHFFKV (64 aa)).

The protein belongs to the universal ribosomal protein uS5 family. As to quaternary structure, part of the 30S ribosomal subunit. Contacts proteins S4 and S8.

In terms of biological role, with S4 and S12 plays an important role in translational accuracy. Located at the back of the 30S subunit body where it stabilizes the conformation of the head with respect to the body. This Parafrankia sp. (strain EAN1pec) protein is Small ribosomal subunit protein uS5.